A 301-amino-acid chain; its full sequence is 4-hydroxy-tetrahydrodipicolinate synthase (301 aa).

Thr-46 contributes to the pyruvate binding site. Tyr-134 functions as the Proton donor/acceptor in the catalytic mechanism. Lys-162 serves as the catalytic Schiff-base intermediate with substrate. Ile-203 serves as a coordination point for pyruvate.

The protein belongs to the DapA family. Homotetramer; dimer of dimers.

Its subcellular location is the cytoplasm. It catalyses the reaction L-aspartate 4-semialdehyde + pyruvate = (2S,4S)-4-hydroxy-2,3,4,5-tetrahydrodipicolinate + H2O + H(+). Its pathway is amino-acid biosynthesis; L-lysine biosynthesis via DAP pathway; (S)-tetrahydrodipicolinate from L-aspartate: step 3/4. Functionally, catalyzes the condensation of (S)-aspartate-beta-semialdehyde [(S)-ASA] and pyruvate to 4-hydroxy-tetrahydrodipicolinate (HTPA). The chain is 4-hydroxy-tetrahydrodipicolinate synthase from Anaplasma marginale (strain St. Maries).